A 141-amino-acid polypeptide reads, in one-letter code: Large ribosomal subunit protein uL11 (141 aa).

Belongs to the universal ribosomal protein uL11 family. In terms of assembly, part of the ribosomal stalk of the 50S ribosomal subunit. Interacts with L10 and the large rRNA to form the base of the stalk. L10 forms an elongated spine to which L12 dimers bind in a sequential fashion forming a multimeric L10(L12)X complex. In terms of processing, one or more lysine residues are methylated.

Forms part of the ribosomal stalk which helps the ribosome interact with GTP-bound translation factors. The protein is Large ribosomal subunit protein uL11 of Thermotoga neapolitana (strain ATCC 49049 / DSM 4359 / NBRC 107923 / NS-E).